The following is a 559-amino-acid chain: TBC1 domain family member 24 (559 aa).

Residues Lys-36, Arg-40, Lys-238, Arg-242, and 293-297 (RLFSR) contribute to the a 1,2-diacyl-sn-glycero-3-phospho-(1D-myo-inositol) site. The region spanning 47–262 (SHALRGKVYQ…KVRAGQPLES (216 aa)) is the Rab-GAP TBC domain. Positions 343–554 (EIVSVREMRD…IAAVEAWGFQ (212 aa)) constitute a TLDc domain. A phosphoserine mark is found at Ser-473 and Ser-480.

In terms of assembly, interacts with ARF6. Highest expression in brain.

It localises to the cell membrane. The protein resides in the cytoplasm. The protein localises to the cytoplasmic vesicle membrane. Its subcellular location is the presynapse. May act as a GTPase-activating protein for Rab family protein(s). Involved in neuronal projections development, probably through a negative modulation of ARF6 function. Involved in the regulation of synaptic vesicle trafficking. This chain is TBC1 domain family member 24 (TBC1D24), found in Homo sapiens (Human).